We begin with the raw amino-acid sequence, 158 residues long: Transcription elongation factor GreA (158 aa).

Residues glutamine 4–histidine 70 are a coiled coil.

The protein belongs to the GreA/GreB family.

Its function is as follows. Necessary for efficient RNA polymerase transcription elongation past template-encoded arresting sites. The arresting sites in DNA have the property of trapping a certain fraction of elongating RNA polymerases that pass through, resulting in locked ternary complexes. Cleavage of the nascent transcript by cleavage factors such as GreA or GreB allows the resumption of elongation from the new 3'terminus. GreA releases sequences of 2 to 3 nucleotides. This is Transcription elongation factor GreA from Staphylococcus aureus (strain Mu3 / ATCC 700698).